A 293-amino-acid polypeptide reads, in one-letter code: Phycoerythrin class 2 subunit gamma, linker polypeptide (293 aa).

Position 49 (Cys-49) interacts with phycourobilin. The PBS-linker domain maps to 50-229 (AAMGIGIGPR…LGGMKVAISD (180 aa)).

Post-translationally, contains one covalently linked phycourobilin chromophore.

It is found in the cellular thylakoid membrane. Its function is as follows. This protein is a bile pigment-bearing rod linker polypeptide that associates with C-phycoerythrin. This is Phycoerythrin class 2 subunit gamma, linker polypeptide (mpeC) from Synechococcus sp. (strain WH8020).